Here is a 192-residue protein sequence, read N- to C-terminus: Lipid A acyltransferase PagP (192 aa).

An N-terminal signal peptide occupies residues 1 to 24 (MWLRFCAPALMAWYWVFFPSTSQA). Active-site residues include His63, Asp106, and Ser107.

It belongs to the lipid A palmitoyltransferase family. As to quaternary structure, homodimer.

The protein localises to the cell outer membrane. It catalyses the reaction a lipid A + a 1,2-diacyl-sn-glycero-3-phosphocholine = a hepta-acyl lipid A + a 2-acyl-sn-glycero-3-phosphocholine. The enzyme catalyses a lipid IVA + a 1,2-diacyl-sn-glycero-3-phosphocholine = a lipid IVB + a 2-acyl-sn-glycero-3-phosphocholine. The catalysed reaction is a lipid IIA + a 1,2-diacyl-sn-glycero-3-phosphocholine = a lipid IIB + a 2-acyl-sn-glycero-3-phosphocholine. In terms of biological role, transfers a fatty acid residue from the sn-1 position of a phospholipid to the N-linked hydroxyfatty acid chain on the proximal unit of lipid A or its precursors. The chain is Lipid A acyltransferase PagP from Musicola paradisiaca (strain Ech703) (Dickeya paradisiaca).